A 504-amino-acid polypeptide reads, in one-letter code: ADP,ATP carrier protein 3 (504 aa).

Helical transmembrane passes span 23–43 (LKLF…FGAL), 59–79 (IISF…TILY), 90–110 (YVFY…AYII), 146–166 (YGLM…LMFW), 183–203 (PVLG…LVFF), 230–250 (EMLQ…MLLF), 296–316 (IALL…PWKA), 329–349 (VHFM…FMII), 364–384 (LLTP…IIFI), 386–406 (EIGS…VGAI), 449–469 (FGKS…PTAT), and 473–493 (IIIY…WDVV).

Belongs to the ADP/ATP translocase tlc family.

Its subcellular location is the cell membrane. Provides the rickettsial cell with host ATP in exchange for rickettsial ADP. This is an obligate exchange system. This energy acquiring activity is an important component of rickettsial parasitism. The chain is ADP,ATP carrier protein 3 (tlcC) from Rickettsia bellii (strain RML369-C).